A 142-amino-acid chain; its full sequence is Putative pre-16S rRNA nuclease (142 aa).

The protein belongs to the YqgF nuclease family.

Its subcellular location is the cytoplasm. Functionally, could be a nuclease involved in processing of the 5'-end of pre-16S rRNA. The sequence is that of Putative pre-16S rRNA nuclease from Nitratidesulfovibrio vulgaris (strain DP4) (Desulfovibrio vulgaris).